Reading from the N-terminus, the 458-residue chain is MSRSTPSRSTPSRPVLRFAPSPTGLIHVGNARTALINALLARRAGGTFILRFDDTDAARSRAEYADAIATDLAWLGIPPDLTFRQSDRIGEYEAATQQLKASGRLYPAYESEDELELKRRLQRARSLPPVYDRAALALTAADRARLEAEGRRPHWRFRLDHRVVAWDDGVRGPQQVDTASLSDPVLVRADGSFLYTLPSVVDDLAMGVTDVVRGEDHVTNTAVQIEIFEALGGVAPRFAHHNLLTLPSGEGLSKRLGHLSLSALREAGQEALAVAAAAVLVGTSHAVEAVESLEALAGMVDLAHISRAPARFDPDDLAQLTARTLHMMPFEAAASRLAAAGIGGGVAFWLAVRGNLARFSEAADWWALVSQPAAGVVAESDRTFLGEAAALLPPEPWDGQTYANWIKAVKAASGQSGKALFHPLRLALTGLEKGPELAALLPLMGRERVAGRLGGGVA.

The 'HIGH' region motif lies at 20–30; it reads PSPTGLIHVGN. The 'KMSKS' region motif lies at 251–255; the sequence is GLSKR. Residue Lys-254 coordinates ATP.

Belongs to the class-I aminoacyl-tRNA synthetase family. Glutamate--tRNA ligase type 1 subfamily. Monomer.

It localises to the cytoplasm. It catalyses the reaction tRNA(Glu) + L-glutamate + ATP = L-glutamyl-tRNA(Glu) + AMP + diphosphate. In terms of biological role, catalyzes the attachment of glutamate to tRNA(Glu) in a two-step reaction: glutamate is first activated by ATP to form Glu-AMP and then transferred to the acceptor end of tRNA(Glu). This Xanthobacter autotrophicus (strain ATCC BAA-1158 / Py2) protein is Glutamate--tRNA ligase 2.